We begin with the raw amino-acid sequence, 350 residues long: tRNA uridine(34) hydroxylase (350 aa).

The 95-residue stretch at 146 to 240 (DDPDALFIDM…YARKAREQGL (95 aa)) folds into the Rhodanese domain. Cys-200 serves as the catalytic Cysteine persulfide intermediate.

This sequence belongs to the TrhO family.

The catalysed reaction is uridine(34) in tRNA + AH2 + O2 = 5-hydroxyuridine(34) in tRNA + A + H2O. In terms of biological role, catalyzes oxygen-dependent 5-hydroxyuridine (ho5U) modification at position 34 in tRNAs. The sequence is that of tRNA uridine(34) hydroxylase from Shigella flexneri serotype 5b (strain 8401).